A 367-amino-acid polypeptide reads, in one-letter code: Putative threonine-phosphate decarboxylase (367 aa).

O-phospho-L-threonine is bound by residues 12 to 13 (HG), asparagine 29, and asparagine 152. Lysine 213 carries the post-translational modification N6-(pyridoxal phosphate)lysine. Residues arginine 320 and arginine 334 each coordinate O-phospho-L-threonine.

The protein belongs to the class-II pyridoxal-phosphate-dependent aminotransferase family. The cofactor is pyridoxal 5'-phosphate.

It carries out the reaction O-phospho-L-threonine + H(+) = (R)-1-aminopropan-2-yl phosphate + CO2. It participates in cofactor biosynthesis; adenosylcobalamin biosynthesis. In terms of biological role, decarboxylates L-threonine-O-3-phosphate to yield (R)-1-amino-2-propanol O-2-phosphate, the precursor for the linkage between the nucleotide loop and the corrin ring in cobalamin. This is Putative threonine-phosphate decarboxylase (cobD) from Caldanaerobacter subterraneus subsp. tengcongensis (strain DSM 15242 / JCM 11007 / NBRC 100824 / MB4) (Thermoanaerobacter tengcongensis).